The sequence spans 82 residues: Antitoxin MazE2 (82 aa).

In terms of assembly, probably forms a complex with cognate toxin MazF2.

Functionally, antitoxin component of a type II toxin-antitoxin (TA) system. Labile antitoxin that binds to cognate MazF2 toxin and counteracts its endoribonuclease activity. In Mycobacterium bovis (strain ATCC BAA-935 / AF2122/97), this protein is Antitoxin MazE2 (mazE2).